We begin with the raw amino-acid sequence, 3172 residues long: Erythronolide synthase EryA3 (3172 aa).

Residues 38–452 (GEPIAIVGMA…GTNAHVIVEE (415 aa)) form the Ketosynthase family 3 (KS3) 1 domain. Module regions lie at residues 41-1464 (IAIV…DHYL) and 1492-2891 (IAIV…DHIG). The Acyl-thioester intermediate; for beta-ketoacyl synthase 1 activity role is filled by Cys-199. Catalysis depends on for beta-ketoacyl synthase 1 activity residues His-334 and His-374. The segment at 557-874 (VFPGQGAQWQ…LGEAYAQGVE (318 aa)) is acyltransferase 1. Ser-643 acts as the Acyl-ester intermediate; for acyltransferase 1 activity in catalysis. The segment at 1117-1294 (GTVLVTGGTG…VTSIAWGLWA (178 aa)) is beta-ketoacyl reductase 1. NADP(+) is bound by residues 1125-1128 (TGGI), 1148-1151 (GRRG), 1177-1178 (DV), Lys-1229, and 1249-1250 (FS). Residue Tyr-1264 is the Acyl-ester intermediate; for beta-ketoacyl reductase 1 activity of the active site. The Carrier 1 domain maps to 1392–1467 (EHLAHLIRAE…RLADHYLERL (76 aa)). Ser-1427 carries the O-(pantetheine 4'-phosphoryl)serine modification. The Ketosynthase family 3 (KS3) 2 domain occupies 1489 to 1916 (DDPIAIVGMA…GTNAHVIIAE (428 aa)). Cys-1661 acts as the Acyl-thioester intermediate; for beta-ketoacyl synthase 2 activity in catalysis. Active-site for beta-ketoacyl synthase 2 activity residues include His-1797 and His-1837. The tract at residues 2022-2331 (VFVFPGQGAQ…LARAHVHGVA (310 aa)) is acyltransferase 2. Catalysis depends on Ser-2112, which acts as the Acyl-ester intermediate; for acyltransferase 2 activity. Residues 2557-2731 (GTALVTGGTG…ATSVAWGAWA (175 aa)) form a beta-ketoacyl reductase 2 region. NADP(+) contacts are provided by residues 2565 to 2568 (TGAL), 2588 to 2591 (SRRG), 2617 to 2618 (DV), Lys-2666, and 2686 to 2687 (FS). The active-site Acyl-ester intermediate; for beta-ketoacyl reductase 2 activity is the Tyr-2701. Positions 2819 to 2894 (QELLEFTHSH…RLADHIGQQL (76 aa)) constitute a Carrier 2 domain. Ser-2854 is subject to O-(pantetheine 4'-phosphoryl)serine. The interval 2960–3166 (ICCAGTAAIS…DAIARHIDAW (207 aa)) is thioesterase. Thr-2965 is a substrate binding site. Catalysis depends on Ser-3031, which acts as the Nucleophile; for thioesterase activity. Substrate contacts are provided by Ala-3032 and Asp-3058. His-3148 functions as the Proton acceptor; for thioesterase activity in the catalytic mechanism.

Homodimer. Erythronolide synthase is composed of EryAI, EryAII and EryAIII multimodular (2 modules) polypeptides each coding for a functional synthase subunit which participates in 2 of the six FAS-like elongation steps required for formation of the polyketide. Module 1, 2, 3, 4, 5, and 6 participating in biosynthesis steps 1, 2, 3, 4, 5, and 6, respectively. The cofactor is pantetheine 4'-phosphate.

It carries out the reaction 6 (S)-methylmalonyl-CoA + propanoyl-CoA + 6 NADPH + 12 H(+) = 6-deoxyerythronolide B + 6 CO2 + 6 NADP(+) + 7 CoA + H2O. Its pathway is antibiotic biosynthesis; erythromycin biosynthesis. Inhibited by diphenyl phosphonates derivatives such as diphenyl allylphosphonate. Functionally, involved in the biosynthesis of antibiotic erythromycin via the biosynthesis of its aglycone precursor, 6-deoxyerythronolide B (6-dEB). The polypeptide is Erythronolide synthase EryA3 (Saccharopolyspora erythraea (Streptomyces erythraeus)).